The following is a 360-amino-acid chain: Histidinol-phosphate aminotransferase (360 aa).

K213 bears the N6-(pyridoxal phosphate)lysine mark.

This sequence belongs to the class-II pyridoxal-phosphate-dependent aminotransferase family. Histidinol-phosphate aminotransferase subfamily. As to quaternary structure, homodimer. Pyridoxal 5'-phosphate is required as a cofactor.

It catalyses the reaction L-histidinol phosphate + 2-oxoglutarate = 3-(imidazol-4-yl)-2-oxopropyl phosphate + L-glutamate. Its pathway is amino-acid biosynthesis; L-histidine biosynthesis; L-histidine from 5-phospho-alpha-D-ribose 1-diphosphate: step 7/9. This Baumannia cicadellinicola subsp. Homalodisca coagulata protein is Histidinol-phosphate aminotransferase.